A 330-amino-acid polypeptide reads, in one-letter code: SUMO-activating enzyme subunit 1 (330 aa).

This sequence belongs to the ubiquitin-activating E1 family. Heterodimer of sae1 and sae2. The complex binds sumo via sae2.

It localises to the nucleus. It participates in protein modification; protein sumoylation. In terms of biological role, the dimeric enzyme acts as an E1 ligase for sumo. It mediates ATP-dependent activation of sumo and formation of a thioester with a conserved cysteine residue on sae2. The sequence is that of SUMO-activating enzyme subunit 1 (sae1) from Dictyostelium discoideum (Social amoeba).